The chain runs to 476 residues: Hyaluronidase-2 (476 aa).

Positions 1-20 (MWTGLGPAVTLALVLVVAWA) are cleaved as a signal peptide. Intrachain disulfides connect C47-C343 and C214-C230. N77 and N106 each carry an N-linked (GlcNAc...) asparagine glycan. The active-site Proton donor is the E138. N-linked (GlcNAc...) asparagine glycans are attached at residues N340 and N360. The region spanning 364-442 (AAQYCSWAQC…YLGWGGEQCQ (79 aa)) is the EGF-like domain. 3 disulfide bridges follow: C368/C379, C373/C430, and C432/C441. The GPI-anchor amidated glycine moiety is linked to residue G451. The propeptide at 452 to 476 (ASGAWAGSHLTGLLAVAVLAFTWTS) is removed in mature form.

It belongs to the glycosyl hydrolase 56 family. In terms of assembly, interacts with MST1R. (Microbial infection) Interacts with Jaagsiekte sheep retrovirus (JSRV) envelope proteins.

It is found in the cell membrane. The catalysed reaction is Random hydrolysis of (1-&gt;4)-linkages between N-acetyl-beta-D-glucosamine and D-glucuronate residues in hyaluronate.. Functionally, catalyzes hyaluronan degradation into small fragments that are endocytosed and degraded in lysosomes by HYAL1 and exoglycosidases. Essential for the breakdown of extracellular matrix hyaluronan. In Ovis aries (Sheep), this protein is Hyaluronidase-2 (HYAL2).